The chain runs to 204 residues: Anthranilate synthase component 2 (204 aa).

Residues Arg13–Arg204 enclose the Glutamine amidotransferase type-1 domain. Gly64–Cys66 contributes to the L-glutamine binding site. Cys91 functions as the Nucleophile; for GATase activity in the catalytic mechanism. L-glutamine contacts are provided by residues Gln95 and Ser141–Leu142. Catalysis depends on for GATase activity residues His181 and Glu183.

Heterotetramer consisting of two non-identical subunits: a beta subunit (TrpG) and a large alpha subunit (TrpE).

It carries out the reaction chorismate + L-glutamine = anthranilate + pyruvate + L-glutamate + H(+). It participates in amino-acid biosynthesis; L-tryptophan biosynthesis; L-tryptophan from chorismate: step 1/5. In terms of biological role, part of a heterotetrameric complex that catalyzes the two-step biosynthesis of anthranilate, an intermediate in the biosynthesis of L-tryptophan. In the first step, the glutamine-binding beta subunit (TrpG) of anthranilate synthase (AS) provides the glutamine amidotransferase activity which generates ammonia as a substrate that, along with chorismate, is used in the second step, catalyzed by the large alpha subunit of AS (TrpE) to produce anthranilate. In the absence of TrpG, TrpE can synthesize anthranilate directly from chorismate and high concentrations of ammonia. The sequence is that of Anthranilate synthase component 2 (trpG) from Thermus thermophilus (strain ATCC 27634 / DSM 579 / HB8).